We begin with the raw amino-acid sequence, 839 residues long: Protein translocase subunit SecA (839 aa).

ATP contacts are provided by residues Gln-85, 103–107 (GEGKT), and Asp-493. A compositionally biased stretch (basic and acidic residues) spans 780–790 (QIHEQERERAS). The tract at residues 780-839 (QIHEQERERASQRATTAAPQNIQSQQSANTDDLPKVERNEACPCGSGKKFKNCHGRKSFS) is disordered. Polar residues predominate over residues 791 to 809 (QRATTAAPQNIQSQQSANT). Zn(2+)-binding residues include Cys-821, Cys-823, Cys-832, and His-833. Basic residues predominate over residues 827 to 839 (KKFKNCHGRKSFS).

This sequence belongs to the SecA family. Monomer and homodimer. Part of the essential Sec protein translocation apparatus which comprises SecA, SecYEG and auxiliary proteins SecDF. Other proteins may also be involved. Zn(2+) is required as a cofactor.

It is found in the cell membrane. The protein resides in the cytoplasm. The enzyme catalyses ATP + H2O + cellular proteinSide 1 = ADP + phosphate + cellular proteinSide 2.. Its function is as follows. Part of the Sec protein translocase complex. Interacts with the SecYEG preprotein conducting channel. Has a central role in coupling the hydrolysis of ATP to the transfer of proteins into and across the cell membrane, serving as an ATP-driven molecular motor driving the stepwise translocation of polypeptide chains across the membrane. This chain is Protein translocase subunit SecA, found in Streptococcus pyogenes serotype M28 (strain MGAS6180).